Here is a 397-residue protein sequence, read N- to C-terminus: Cathepsin E-A (397 aa).

The signal sequence occupies residues methionine 1–glycine 16. The propeptide at leucine 17–tyrosine 52 is activation peptide. A Peptidase A1 domain is found at tyrosine 74 to alanine 385. Residue asparagine 86 is glycosylated (N-linked (GlcNAc...) asparagine). Aspartate 92 is a catalytic residue. A disulfide bridge links cysteine 105 with cysteine 110. Asparagine 130 is a glycosylation site (N-linked (GlcNAc...) asparagine). Cysteine 268 and cysteine 272 are disulfide-bonded. Aspartate 277 is a catalytic residue. Residues cysteine 310 and cysteine 344 are joined by a disulfide bond.

This sequence belongs to the peptidase A1 family. In terms of assembly, homodimer; disulfide-linked. Glycosylated. Contains high mannose-type oligosaccharide. As to expression, expressed predominantly in the larval foregut and the anterior and posterior adult stomach.

It localises to the endosome. The enzyme catalyses Similar to cathepsin D, but slightly broader specificity.. Functionally, may have a role in immune function. Probably involved in the processing of antigenic peptides during MHC class II-mediated antigen presentation. The chain is Cathepsin E-A (ctse-a) from Xenopus laevis (African clawed frog).